The sequence spans 118 residues: MPRVKTGVVRRRRHKKILKLAKGFYSGRRKHYRKAKEQLERSMYYSFRDRKQKKRDFRKLWIIRINAACRLNGMNYSTFINGLSKAGIELDRKILADMAMNDAAAFSAVAASAKAALK.

It belongs to the bacterial ribosomal protein bL20 family.

Binds directly to 23S ribosomal RNA and is necessary for the in vitro assembly process of the 50S ribosomal subunit. It is not involved in the protein synthesizing functions of that subunit. In Sulfurimonas denitrificans (strain ATCC 33889 / DSM 1251) (Thiomicrospira denitrificans (strain ATCC 33889 / DSM 1251)), this protein is Large ribosomal subunit protein bL20.